Consider the following 119-residue polypeptide: NAD(P)H-quinone oxidoreductase subunit M (119 aa).

Belongs to the complex I NdhM subunit family. In terms of assembly, NDH-1 can be composed of about 15 different subunits; different subcomplexes with different compositions have been identified which probably have different functions.

It is found in the cellular thylakoid membrane. The enzyme catalyses a plastoquinone + NADH + (n+1) H(+)(in) = a plastoquinol + NAD(+) + n H(+)(out). The catalysed reaction is a plastoquinone + NADPH + (n+1) H(+)(in) = a plastoquinol + NADP(+) + n H(+)(out). NDH-1 shuttles electrons from an unknown electron donor, via FMN and iron-sulfur (Fe-S) centers, to quinones in the respiratory and/or the photosynthetic chain. The immediate electron acceptor for the enzyme in this species is believed to be plastoquinone. Couples the redox reaction to proton translocation, and thus conserves the redox energy in a proton gradient. Cyanobacterial NDH-1 also plays a role in inorganic carbon-concentration. This Crocosphaera subtropica (strain ATCC 51142 / BH68) (Cyanothece sp. (strain ATCC 51142)) protein is NAD(P)H-quinone oxidoreductase subunit M.